A 1479-amino-acid chain; its full sequence is ESX secretion system protein EccC (1479 aa).

At 1–235 the chain is on the cytoplasmic side; the sequence is MSQLWVLYET…SQEGDGDPRG (235 aa). The helical transmembrane segment at 236–256 threads the bilayer; that stretch reads LWLMVLPPVMMLLVIGAVALI. The Extracellular segment spans residues 257–259; it reads QPR. A helical transmembrane segment spans residues 260–280; sequence GVFIMISIAMFATTIVTSTAQ. The Cytoplasmic portion of the chain corresponds to 281–1479; that stretch reads YMREKKARQM…DQKIQIPKVE (1199 aa). Residues 291 to 321 are a coiled coil; it reads RKEKRRRIYTNYLEQKREELQALSEKQRNVL. FtsK domains are found at residues 652-848 and 984-1168; these read NDVV…NDSK and QSDY…SEKF. 672–679 lines the ATP pocket; it reads GTTGSGKS. The active site involves Glu-785. ATP contacts are provided by residues 1004–1009, Asn-1036, Asp-1105, Ile-1197, Asp-1206, 1287–1291, and Ile-1475; these read GYGKST and RKGKT. Positions 1267 to 1444 constitute a FtsK 3 domain; it reads VRPVAINMRT…ILVTKKSEQS (178 aa).

As to quaternary structure, whole protein oligomerizes in native gels. Part of the ESX / type VII secretion system (T7SS), which is composed of cytosolic and membrane components. The ESX membrane complex is composed of EccB, EccC and EccD.

Its subcellular location is the cell membrane. EsxB binding to the third FtsK domain causes multimerization; a subsequent unknown step relieves the allosteric inhibition of linker 2 on FtsK domain 1, activating the ATPase activity. Its function is as follows. Part of the ESX specialized secretion system, which exports proteins from the cell including EsxA (ESAT-6) and EsxB (CFP-10). Might be the translocase subunit. Probably only the first FtsK domain can hydrolyze ATP. This is ESX secretion system protein EccC from Geobacillus thermodenitrificans (strain NG80-2).